The sequence spans 382 residues: tRNA-specific 2-thiouridylase MnmA (382 aa).

ATP is bound by residues 18 to 25 (AMSGGVDS) and Leu44. Residue Cys112 is the Nucleophile of the active site. Cys112 and Cys209 form a disulfide bridge. ATP is bound at residue Gly136. The interaction with tRNA stretch occupies residues 159 to 161 (RDQ). Residue Cys209 is the Cysteine persulfide intermediate of the active site.

Belongs to the MnmA/TRMU family.

Its subcellular location is the cytoplasm. It catalyses the reaction S-sulfanyl-L-cysteinyl-[protein] + uridine(34) in tRNA + AH2 + ATP = 2-thiouridine(34) in tRNA + L-cysteinyl-[protein] + A + AMP + diphosphate + H(+). Its function is as follows. Catalyzes the 2-thiolation of uridine at the wobble position (U34) of tRNA, leading to the formation of s(2)U34. This Methylobacterium nodulans (strain LMG 21967 / CNCM I-2342 / ORS 2060) protein is tRNA-specific 2-thiouridylase MnmA.